Reading from the N-terminus, the 117-residue chain is Cytochrome c6 (117 aa).

The first 24 residues, Met-1–Ala-24, serve as a signal peptide directing secretion. Heme c-binding residues include Cys-38, Cys-41, His-42, and Met-89.

The protein belongs to the cytochrome c family. PetJ subfamily. As to quaternary structure, monomer. Post-translationally, binds 1 heme c group covalently per subunit.

It is found in the cellular thylakoid lumen. Functions as an electron carrier between membrane-bound cytochrome b6-f and photosystem I in oxygenic photosynthesis. This chain is Cytochrome c6 (petJ), found in Picosynechococcus sp. (strain ATCC 27264 / PCC 7002 / PR-6) (Agmenellum quadruplicatum).